Reading from the N-terminus, the 122-residue chain is Large ribosomal subunit protein uL22 (122 aa).

Residues 103 to 122 form a disordered region; that stretch reads VEGKEMKSSKSHKKNQAEGK.

Belongs to the universal ribosomal protein uL22 family. In terms of assembly, part of the 50S ribosomal subunit.

In terms of biological role, this protein binds specifically to 23S rRNA; its binding is stimulated by other ribosomal proteins, e.g. L4, L17, and L20. It is important during the early stages of 50S assembly. It makes multiple contacts with different domains of the 23S rRNA in the assembled 50S subunit and ribosome. Functionally, the globular domain of the protein is located near the polypeptide exit tunnel on the outside of the subunit, while an extended beta-hairpin is found that lines the wall of the exit tunnel in the center of the 70S ribosome. This chain is Large ribosomal subunit protein uL22, found in Helicobacter pylori (strain P12).